Here is a 255-residue protein sequence, read N- to C-terminus: Probable cyclic nucleotide phosphodiesterase syc0937_d (255 aa).

Positions 19, 21, 59, 89, 157, 196, and 198 each coordinate Fe cation. AMP is bound by residues H21, D59, and 89–90 (NH). An AMP-binding site is contributed by H198.

Belongs to the cyclic nucleotide phosphodiesterase class-III family. Fe(2+) is required as a cofactor.

In Synechococcus sp. (strain ATCC 27144 / PCC 6301 / SAUG 1402/1) (Anacystis nidulans), this protein is Probable cyclic nucleotide phosphodiesterase syc0937_d.